Here is a 481-residue protein sequence, read N- to C-terminus: uncharacterized protein (481 aa).

The next 11 membrane-spanning stretches (helical) occupy residues 14 to 34 (LGFC…GIFL), 46 to 66 (FAPM…IVFA), 90 to 110 (IGIY…GVLA), 134 to 154 (FSVK…INLF), 167 to 187 (TVGK…IITT), 218 to 238 (FSSM…FESI), 258 to 278 (IAIF…MLLG), 303 to 323 (IIVV…SFGA), 377 to 397 (LAVI…IALA), 411 to 431 (AFTD…LAVS), and 446 to 466 (YFSI…AYLH).

It belongs to the amino acid-polyamine-organocation (APC) superfamily.

It localises to the cell membrane. Its function is as follows. Probable amino-acid or metabolite transport protein. This is an uncharacterized protein from Mycobacterium tuberculosis (strain CDC 1551 / Oshkosh).